The chain runs to 412 residues: Isocitrate dehydrogenase [NADP] cytoplasmic (412 aa).

NADP(+)-binding positions include 76–78 (TIT) and Arg-83. Residue Thr-78 participates in substrate binding. Substrate contacts are provided by residues 95–101 (SPNGTIR), Arg-110, and Arg-133. Asp-253 lines the Mn(2+) pocket. NADP(+) is bound at residue Lys-261. Asp-276 contacts Mn(2+). NADP(+) is bound by residues 309-314 (GTVTRH) and Asn-327.

Belongs to the isocitrate and isopropylmalate dehydrogenases family. In terms of assembly, homodimer. Mg(2+) serves as cofactor. Mn(2+) is required as a cofactor.

It is found in the cytoplasm. It catalyses the reaction D-threo-isocitrate + NADP(+) = 2-oxoglutarate + CO2 + NADPH. This Dictyostelium discoideum (Social amoeba) protein is Isocitrate dehydrogenase [NADP] cytoplasmic (idhC).